The following is a 240-amino-acid chain: UDP-2,3-diacylglucosamine hydrolase (240 aa).

5 residues coordinate Mn(2+): Asp-8, His-10, Asp-41, Asn-79, and His-114. Residue 79–80 (NR) participates in substrate binding. Substrate is bound by residues Asp-122, Ser-160, Asn-164, Lys-167, and His-195. Mn(2+)-binding residues include His-195 and His-197.

The protein belongs to the LpxH family. Mn(2+) is required as a cofactor.

The protein localises to the cell inner membrane. It catalyses the reaction UDP-2-N,3-O-bis[(3R)-3-hydroxytetradecanoyl]-alpha-D-glucosamine + H2O = 2-N,3-O-bis[(3R)-3-hydroxytetradecanoyl]-alpha-D-glucosaminyl 1-phosphate + UMP + 2 H(+). It participates in glycolipid biosynthesis; lipid IV(A) biosynthesis; lipid IV(A) from (3R)-3-hydroxytetradecanoyl-[acyl-carrier-protein] and UDP-N-acetyl-alpha-D-glucosamine: step 4/6. Hydrolyzes the pyrophosphate bond of UDP-2,3-diacylglucosamine to yield 2,3-diacylglucosamine 1-phosphate (lipid X) and UMP by catalyzing the attack of water at the alpha-P atom. Involved in the biosynthesis of lipid A, a phosphorylated glycolipid that anchors the lipopolysaccharide to the outer membrane of the cell. The polypeptide is UDP-2,3-diacylglucosamine hydrolase (Salmonella agona (strain SL483)).